We begin with the raw amino-acid sequence, 389 residues long: Putative RNA methyltransferase R405 (389 aa).

Residues glutamine 207, aspartate 261, and aspartate 314 each contribute to the S-adenosyl-L-methionine site. Catalysis depends on cysteine 342, which acts as the Nucleophile.

This sequence belongs to the class I-like SAM-binding methyltransferase superfamily. RNA M5U methyltransferase family.

The polypeptide is Putative RNA methyltransferase R405 (Acanthamoeba polyphaga (Amoeba)).